We begin with the raw amino-acid sequence, 850 residues long: Bifunctional levopimaradiene synthase, chloroplastic (850 aa).

A chloroplast-targeting transit peptide spans 1–52 (MALPSSSLSSQIHTGATTQCIPHFHGSLNAGTSAGKRRSLYLRWGKGPSKIV). Lys250 is a binding site for substrate. Mg(2+) contacts are provided by Asp383 and Asp385. Positions 383–386 (DIDD) match the DXDD motif motif. Residue Lys470 coordinates substrate. Mg(2+) contacts are provided by Asp602, Asp606, Asn746, Thr750, and Glu754. The short motif at 602 to 606 (DDLYD) is the DDXXD motif element.

Belongs to the terpene synthase family. Tpsd subfamily. It depends on Mg(2+) as a cofactor. As to expression, expressed in young tissues such as flushing buds and green bark tissues. Lower levels in mature needles and bark.

The protein localises to the plastid. Its subcellular location is the chloroplast. The enzyme catalyses (2E,6E,10E)-geranylgeranyl diphosphate = (+)-copalyl diphosphate. It catalyses the reaction (+)-copalyl diphosphate = abieta-8(14),12-diene + diphosphate. It carries out the reaction (+)-copalyl diphosphate = neoabietadiene + diphosphate. It participates in terpene metabolism; oleoresin biosynthesis. Functionally, involved in defensive oleoresin formation in conifers in response to insect attack or other injury. Involved in diterpene (C20) olefins biosynthesis. Bifunctional enzyme that catalyzes two sequential cyclizations of geranylgeranyl diphosphate (GGPP) to levopimaradiene. Levopimaradiene is the major products of the enzyme followed by abietadiene, neoabietadiene and palustradiene. No activity with geranyl diphosphate (GPP) or farnesyl diphosphate (FPP) as substrate. The sequence is that of Bifunctional levopimaradiene synthase, chloroplastic (LPS) from Pinus taeda (Loblolly pine).